A 589-amino-acid polypeptide reads, in one-letter code: L-fucose isomerase (589 aa).

Catalysis depends on proton acceptor residues Glu-340 and Asp-364. Mn(2+)-binding residues include Glu-340, Asp-364, and His-527.

The protein belongs to the L-fucose isomerase family. Mn(2+) is required as a cofactor.

Its subcellular location is the cytoplasm. The enzyme catalyses L-fucose = L-fuculose. Its pathway is carbohydrate degradation; L-fucose degradation; L-lactaldehyde and glycerone phosphate from L-fucose: step 1/3. Converts the aldose L-fucose into the corresponding ketose L-fuculose. The polypeptide is L-fucose isomerase (Haemophilus influenzae (strain ATCC 51907 / DSM 11121 / KW20 / Rd)).